The sequence spans 237 residues: Ribonuclease PH (237 aa).

Phosphate is bound by residues Arg-86 and 124 to 126 (GTR).

Belongs to the RNase PH family. Homohexameric ring arranged as a trimer of dimers.

The catalysed reaction is tRNA(n+1) + phosphate = tRNA(n) + a ribonucleoside 5'-diphosphate. Its function is as follows. Phosphorolytic 3'-5' exoribonuclease that plays an important role in tRNA 3'-end maturation. Removes nucleotide residues following the 3'-CCA terminus of tRNAs; can also add nucleotides to the ends of RNA molecules by using nucleoside diphosphates as substrates, but this may not be physiologically important. Probably plays a role in initiation of 16S rRNA degradation (leading to ribosome degradation) during starvation. The protein is Ribonuclease PH of Methylobacterium radiotolerans (strain ATCC 27329 / DSM 1819 / JCM 2831 / NBRC 15690 / NCIMB 10815 / 0-1).